The chain runs to 196 residues: GTP cyclohydrolase 1 (196 aa).

3 residues coordinate Zn(2+): Cys86, His89, and Cys158.

The protein belongs to the GTP cyclohydrolase I family. In terms of assembly, homomer.

The enzyme catalyses GTP + H2O = 7,8-dihydroneopterin 3'-triphosphate + formate + H(+). It functions in the pathway cofactor biosynthesis; 7,8-dihydroneopterin triphosphate biosynthesis; 7,8-dihydroneopterin triphosphate from GTP: step 1/1. The polypeptide is GTP cyclohydrolase 1 (Clostridium botulinum (strain Kyoto / Type A2)).